Reading from the N-terminus, the 241-residue chain is Terpene cyclase olcD (241 aa).

7 consecutive transmembrane segments (helical) span residues 19-39 (LSDILLVTLASGWLVCYFATI), 49-71 (WMPLLPLSCNVAWELVFITLYPP), 76-95 (ILGFWLLVNLGVIYSALRFA), 108-128 (YLPVLFVLAVGFWAWGHLALI), 137-157 (FYYGGMACQLMTSAAALSGLV), 166-186 (SYTIWLSRVIGTSSALAGLFF), and 202-222 (LMRWLAAAFGILDGVYGVQFW).

Belongs to the paxB family.

It localises to the membrane. The protein operates within secondary metabolite biosynthesis; terpenoid biosynthesis. Terpene cyclase; part of the gene cluster that mediates the biosynthesis of 15-deoxyoxalicine B. The first step of the pathway is the synthesis of nicotinyl-CoA from nicotinic acid by the nicotinic acid-CoA ligase olcI. Nicotinyl-CoA is then a substrate of polyketide synthase olcA to produce 4-hydroxy-6-(3-pyridinyl)-2H-pyran-2-one (HPPO) which is further prenylated by the polyprenyl transferase olcH to yield geranylgeranyl-HPPO. Geranylgeranyl pyrophosphate is provided by the cluster-specific geranylgeranyl pyrophosphate synthase olcC. The FAD-dependent monooxygenase olcE catalyzes the epoxidation of geranylgeranyl-HPPO and the terpene cyclase olcD catalyzes the cyclization of the terpenoid component, resulting in the formation of the tricyclic terpene moiety seen in predecaturin E. The cytochrome P450 monooxygenase then catalyzes the allylic oxidation of predecaturin E, which is followed by spirocylization with concomitant loss of one molecule of water to form decaturin E. Decaturin E is the substrate of the cytochrome P450 monooxygenase olcJ which hydroxylates it at the C-29 position to form decaturin F. The short-chain dehydrogenase/reductase olcF may catalyze the oxidation of decaturin F to generate the 29-hydroxyl-27-one intermediate, and subsequent hemiacetal formation probably leads to the formation of decaturin C. The dioxygenase olcK may be a peroxisomal enzyme that catalyzes the hydroxylation of decaturin C into decaturin A once decaturin C is shuttled into the peroxisome by the MFS transporter olcL. Finally the cytochrome P450 monooxygenase olcB catalyzes the oxidative rearrangement to yield 15-deoxyoxalicine B. In the absence of olcJ, decaturin E may be shunted to a pathway in which it is oxidized to a ketone, possibly by olcF, to form decaturin D, which undergoes further allylic oxidation to yield decaturin G. Moreover, in the absence of oclK or oclL, oclB can convert decaturin C into 15-deoxyoxalicine A. The sequence is that of Terpene cyclase olcD from Penicillium canescens.